The following is a 394-amino-acid chain: 1-deoxy-D-xylulose 5-phosphate reductoisomerase (394 aa).

Residues threonine 13, glycine 14, threonine 15, isoleucine 16, and asparagine 125 each contribute to the NADPH site. Lysine 126 contributes to the 1-deoxy-D-xylulose 5-phosphate binding site. Glutamate 127 serves as a coordination point for NADPH. Mn(2+) is bound at residue aspartate 151. Residues serine 152, glutamate 153, serine 182, and histidine 205 each contribute to the 1-deoxy-D-xylulose 5-phosphate site. Glutamate 153 provides a ligand contact to Mn(2+). Glycine 211 is an NADPH binding site. 1-deoxy-D-xylulose 5-phosphate-binding residues include serine 218, asparagine 223, lysine 224, and glutamate 227. Mn(2+) is bound at residue glutamate 227.

The protein belongs to the DXR family. Mg(2+) serves as cofactor. It depends on Mn(2+) as a cofactor.

It catalyses the reaction 2-C-methyl-D-erythritol 4-phosphate + NADP(+) = 1-deoxy-D-xylulose 5-phosphate + NADPH + H(+). It functions in the pathway isoprenoid biosynthesis; isopentenyl diphosphate biosynthesis via DXP pathway; isopentenyl diphosphate from 1-deoxy-D-xylulose 5-phosphate: step 1/6. Its function is as follows. Catalyzes the NADPH-dependent rearrangement and reduction of 1-deoxy-D-xylulose-5-phosphate (DXP) to 2-C-methyl-D-erythritol 4-phosphate (MEP). The sequence is that of 1-deoxy-D-xylulose 5-phosphate reductoisomerase from Methylobacillus flagellatus (strain ATCC 51484 / DSM 6875 / VKM B-1610 / KT).